The chain runs to 297 residues: 4-hydroxy-tetrahydrodipicolinate synthase (297 aa).

T47 is a pyruvate binding site. The active-site Proton donor/acceptor is Y135. K163 serves as the catalytic Schiff-base intermediate with substrate. Residue I205 participates in pyruvate binding.

It belongs to the DapA family. Homotetramer; dimer of dimers.

It is found in the cytoplasm. It catalyses the reaction L-aspartate 4-semialdehyde + pyruvate = (2S,4S)-4-hydroxy-2,3,4,5-tetrahydrodipicolinate + H2O + H(+). It functions in the pathway amino-acid biosynthesis; L-lysine biosynthesis via DAP pathway; (S)-tetrahydrodipicolinate from L-aspartate: step 3/4. Functionally, catalyzes the condensation of (S)-aspartate-beta-semialdehyde [(S)-ASA] and pyruvate to 4-hydroxy-tetrahydrodipicolinate (HTPA). This is 4-hydroxy-tetrahydrodipicolinate synthase from Dehalococcoides mccartyi (strain ATCC BAA-2266 / KCTC 15142 / 195) (Dehalococcoides ethenogenes (strain 195)).